Reading from the N-terminus, the 321-residue chain is Probable arabinan endo-1,5-alpha-L-arabinosidase A (321 aa).

A signal peptide spans 1–19 (MHPSTFVTTIACLAGLAHG). Residue Asp34 is the Proton acceptor of the active site. Glu200 acts as the Proton donor in catalysis.

Belongs to the glycosyl hydrolase 43 family.

The protein localises to the secreted. The enzyme catalyses Endohydrolysis of (1-&gt;5)-alpha-arabinofuranosidic linkages in (1-&gt;5)-arabinans.. Its pathway is glycan metabolism; L-arabinan degradation. Endo-1,5-alpha-L-arabinanase involved in degradation of pectin. Its preferred substrate is linear 1,5-alpha-L-arabinan. The chain is Probable arabinan endo-1,5-alpha-L-arabinosidase A (abnA) from Aspergillus clavatus (strain ATCC 1007 / CBS 513.65 / DSM 816 / NCTC 3887 / NRRL 1 / QM 1276 / 107).